A 116-amino-acid polypeptide reads, in one-letter code: Probable prefoldin subunit 2 (116 aa).

It belongs to the prefoldin subunit beta family. As to quaternary structure, heterohexamer of two PFD-alpha type and four PFD-beta type subunits.

In terms of biological role, binds specifically to cytosolic chaperonin (c-CPN) and transfers target proteins to it. Binds to nascent polypeptide chain and promotes folding in an environment in which there are many competing pathways for nonnative proteins. This is Probable prefoldin subunit 2 (pfdn2) from Dictyostelium discoideum (Social amoeba).